The sequence spans 89 residues: Large ribosomal subunit protein eL34 (89 aa).

This sequence belongs to the eukaryotic ribosomal protein eL34 family.

The chain is Large ribosomal subunit protein eL34 (rpl34e) from Methanocaldococcus jannaschii (strain ATCC 43067 / DSM 2661 / JAL-1 / JCM 10045 / NBRC 100440) (Methanococcus jannaschii).